A 302-amino-acid polypeptide reads, in one-letter code: 4-hydroxy-tetrahydrodipicolinate synthase (302 aa).

Threonine 56 lines the pyruvate pocket. The active-site Proton donor/acceptor is tyrosine 145. Catalysis depends on lysine 173, which acts as the Schiff-base intermediate with substrate. Valine 215 serves as a coordination point for pyruvate.

The protein belongs to the DapA family. Homotetramer; dimer of dimers.

It localises to the cytoplasm. It catalyses the reaction L-aspartate 4-semialdehyde + pyruvate = (2S,4S)-4-hydroxy-2,3,4,5-tetrahydrodipicolinate + H2O + H(+). Its pathway is amino-acid biosynthesis; L-lysine biosynthesis via DAP pathway; (S)-tetrahydrodipicolinate from L-aspartate: step 3/4. Catalyzes the condensation of (S)-aspartate-beta-semialdehyde [(S)-ASA] and pyruvate to 4-hydroxy-tetrahydrodipicolinate (HTPA). The protein is 4-hydroxy-tetrahydrodipicolinate synthase of Prochlorococcus marinus subsp. pastoris (strain CCMP1986 / NIES-2087 / MED4).